A 143-amino-acid polypeptide reads, in one-letter code: Small ribosomal subunit protein uS12 (143 aa).

Proline 62 bears the Hydroxyproline mark.

It belongs to the universal ribosomal protein uS12 family. In terms of assembly, component of the 40S small ribosomal subunit.

It is found in the cytoplasm. The protein localises to the cytosol. The protein resides in the rough endoplasmic reticulum. This Caenorhabditis elegans protein is Small ribosomal subunit protein uS12 (rps-23).